The chain runs to 123 residues: UPF0102 protein CLD_2200 (123 aa).

Belongs to the UPF0102 family.

The polypeptide is UPF0102 protein CLD_2200 (Clostridium botulinum (strain Okra / Type B1)).